The following is a 47-amino-acid chain: Sperm protamine P1 (47 aa).

It belongs to the protamine P1 family. As to expression, testis.

It is found in the nucleus. Its subcellular location is the chromosome. In terms of biological role, protamines substitute for histones in the chromatin of sperm during the haploid phase of spermatogenesis. They compact sperm DNA into a highly condensed, stable and inactive complex. This is Sperm protamine P1 (PRM1) from Myotis daubentonii (Daubenton's bat).